A 528-amino-acid chain; its full sequence is Chaperonin GroEL, chloroplastic (528 aa).

ATP contacts are provided by residues 29–32 (TLGP), 86–90 (DGTTT), G414, and D496.

This sequence belongs to the chaperonin (HSP60) family. As to quaternary structure, forms a cylinder of 14 subunits composed of two heptameric rings stacked back-to-back. Interacts with the co-chaperonin GroES.

It localises to the plastid. The protein localises to the chloroplast. It catalyses the reaction ATP + H2O + a folded polypeptide = ADP + phosphate + an unfolded polypeptide.. Its function is as follows. Together with its co-chaperonin GroES, plays an essential role in assisting protein folding. The GroEL-GroES system forms a nano-cage that allows encapsulation of the non-native substrate proteins and provides a physical environment optimized to promote and accelerate protein folding. The chain is Chaperonin GroEL, chloroplastic from Porphyra purpurea (Red seaweed).